The primary structure comprises 264 residues: Meiotic recombination protein REC102 (264 aa).

Belongs to the TOP6B-like family. As to quaternary structure, interacts with REC104; seems to form a functional unit with REC104. REC102-REC104 interacts with SKI8-SPO11 and this interaction is required for proper subcellular location of the proteins during the initiation of recombination. Interacts with MEI4, REC114 and SPO11.

It localises to the nucleus. Required for formation of the SPO11-mediated double-strand breaks (DSBs) that initiate meiotic recombination. May mediate the interaction between SPO11 subunits during meiosis. Also needed for homolog chromosome pairing, synaptonemal complex formation, and for the proper timing of the first meiotic division. Not required for mitosis and mitotic DNA repair mechanisms. In Saccharomyces cerevisiae (strain ATCC 204508 / S288c) (Baker's yeast), this protein is Meiotic recombination protein REC102.